We begin with the raw amino-acid sequence, 277 residues long: Indole-3-glycerol phosphate synthase (277 aa).

It belongs to the TrpC family.

The catalysed reaction is 1-(2-carboxyphenylamino)-1-deoxy-D-ribulose 5-phosphate + H(+) = (1S,2R)-1-C-(indol-3-yl)glycerol 3-phosphate + CO2 + H2O. Its pathway is amino-acid biosynthesis; L-tryptophan biosynthesis; L-tryptophan from chorismate: step 4/5. This Pseudomonas putida (Arthrobacter siderocapsulatus) protein is Indole-3-glycerol phosphate synthase (trpC).